A 148-amino-acid chain; its full sequence is Cytochrome c-type biogenesis protein CcmE (148 aa).

The Cytoplasmic segment spans residues 1–7 (MKPRSKR). Residues 8–28 (LLLVAGAVALLVGAVALVLNA) form a helical; Signal-anchor for type II membrane protein membrane-spanning segment. The Periplasmic portion of the chain corresponds to 29-148 (FQQNLVFFHT…AQKAAQTVQQ (120 aa)). 2 residues coordinate heme: His-123 and Tyr-127.

This sequence belongs to the CcmE/CycJ family.

The protein resides in the cell inner membrane. Heme chaperone required for the biogenesis of c-type cytochromes. Transiently binds heme delivered by CcmC and transfers the heme to apo-cytochromes in a process facilitated by CcmF and CcmH. The sequence is that of Cytochrome c-type biogenesis protein CcmE from Aromatoleum aromaticum (strain DSM 19018 / LMG 30748 / EbN1) (Azoarcus sp. (strain EbN1)).